The primary structure comprises 312 residues: Aspartate carbamoyltransferase catalytic subunit (312 aa).

2 residues coordinate carbamoyl phosphate: arginine 55 and threonine 56. Lysine 83 provides a ligand contact to L-aspartate. Carbamoyl phosphate is bound by residues arginine 105, histidine 138, and glutamine 141. 2 residues coordinate L-aspartate: arginine 171 and arginine 225. Carbamoyl phosphate contacts are provided by glycine 266 and proline 267.

This sequence belongs to the aspartate/ornithine carbamoyltransferase superfamily. ATCase family. Heterododecamer (2C3:3R2) of six catalytic PyrB chains organized as two trimers (C3), and six regulatory PyrI chains organized as three dimers (R2).

The catalysed reaction is carbamoyl phosphate + L-aspartate = N-carbamoyl-L-aspartate + phosphate + H(+). Its pathway is pyrimidine metabolism; UMP biosynthesis via de novo pathway; (S)-dihydroorotate from bicarbonate: step 2/3. Its function is as follows. Catalyzes the condensation of carbamoyl phosphate and aspartate to form carbamoyl aspartate and inorganic phosphate, the committed step in the de novo pyrimidine nucleotide biosynthesis pathway. The sequence is that of Aspartate carbamoyltransferase catalytic subunit from Corynebacterium glutamicum (strain ATCC 13032 / DSM 20300 / JCM 1318 / BCRC 11384 / CCUG 27702 / LMG 3730 / NBRC 12168 / NCIMB 10025 / NRRL B-2784 / 534).